Reading from the N-terminus, the 346-residue chain is 3-keto-steroid reductase ERG27 (346 aa).

Residues Leu19, Thr42, and Lys48 each coordinate NADP(+). Residues Ser182 and Tyr205 each act as proton donor in the active site. NADP(+)-binding residues include Tyr205, Lys209, and Ser241. Lys209 serves as the catalytic Lowers pKa of active site Tyr. The chain crosses the membrane as a helical span at residues 242–262 (FSFFQYLNVFTYYGMLFLFYL). Asn272 is a glycosylation site (N-linked (GlcNAc...) asparagine).

It belongs to the short-chain dehydrogenases/reductases (SDR) family. ERG27 subfamily. In terms of assembly, heterotetramer of ERG25, ERG26, ERG27 and ERG28. ERG28 acts as a scaffold to tether ERG27 and other 4,4-demethylation-related enzymes, forming a demethylation enzyme complex, in the endoplasmic reticulum. Interacts with ERG25 and ERG28. Also interacts with ERG7, but only in lipid particles.

It is found in the endoplasmic reticulum membrane. It localises to the lipid droplet. The enzyme catalyses 3-dehydro-4alpha-methylzymosterol + NADPH + H(+) = 4alpha-methylzymosterol + NADP(+). Its pathway is steroid biosynthesis; zymosterol biosynthesis; zymosterol from lanosterol: step 5/6. Functionally, 3-keto-steroid reductase; part of the third module of ergosterol biosynthesis pathway that includes the late steps of the pathway. ERG27 is a catalytic component of the C-4 demethylation complex that catalyzes the reduction of the keto group on the C-3. The third module or late pathway involves the ergosterol synthesis itself through consecutive reactions that mainly occur in the endoplasmic reticulum (ER) membrane. Firstly, the squalene synthase ERG9 catalyzes the condensation of 2 farnesyl pyrophosphate moieties to form squalene, which is the precursor of all steroids. Squalene synthase is crucial for balancing the incorporation of farnesyl diphosphate (FPP) into sterol and nonsterol isoprene synthesis. Secondly, the squalene epoxidase ERG1 catalyzes the stereospecific oxidation of squalene to (S)-2,3-epoxysqualene, which is considered to be a rate-limiting enzyme in steroid biosynthesis. Then, the lanosterol synthase ERG7 catalyzes the cyclization of (S)-2,3 oxidosqualene to lanosterol, a reaction that forms the sterol core. In the next steps, lanosterol is transformed to zymosterol through a complex process involving various demethylation, reduction and desaturation reactions. The lanosterol 14-alpha-demethylase ERG11 (also known as CYP51) catalyzes C14-demethylation of lanosterol to produce 4,4'-dimethyl cholesta-8,14,24-triene-3-beta-ol, which is critical for ergosterol biosynthesis. The C-14 reductase ERG24 reduces the C14=C15 double bond of 4,4-dimethyl-cholesta-8,14,24-trienol to produce 4,4-dimethyl-cholesta-8,24-dienol. 4,4-dimethyl-cholesta-8,24-dienol is substrate of the C-4 demethylation complex ERG25-ERG26-ERG27 in which ERG25 catalyzes the three-step monooxygenation required for the demethylation of 4,4-dimethyl and 4alpha-methylsterols, ERG26 catalyzes the oxidative decarboxylation that results in a reduction of the 3-beta-hydroxy group at the C-3 carbon to an oxo group, and ERG27 is responsible for the reduction of the keto group on the C-3. ERG28 has a role as a scaffold to help anchor ERG25, ERG26 and ERG27 to the endoplasmic reticulum and ERG29 regulates the activity of the iron-containing C4-methylsterol oxidase ERG25. Then, the sterol 24-C-methyltransferase ERG6 catalyzes the methyl transfer from S-adenosyl-methionine to the C-24 of zymosterol to form fecosterol. The C-8 sterol isomerase ERG2 catalyzes the reaction which results in unsaturation at C-7 in the B ring of sterols and thus converts fecosterol to episterol. The sterol-C5-desaturase ERG3 then catalyzes the introduction of a C-5 double bond in the B ring to produce 5-dehydroepisterol. The C-22 sterol desaturase ERG5 further converts 5-dehydroepisterol into ergosta-5,7,22,24(28)-tetraen-3beta-ol by forming the C-22(23) double bond in the sterol side chain. Finally, ergosta-5,7,22,24(28)-tetraen-3beta-ol is substrate of the C-24(28) sterol reductase ERG4 to produce ergosterol. Its function is as follows. Facilitates the association of ERG7 with lipid particles preventing its digestion in the endoplasmic reticulum and the lipid particles. The sequence is that of 3-keto-steroid reductase ERG27 from Candida albicans (Yeast).